Here is a 131-residue protein sequence, read N- to C-terminus: uncharacterized protein (131 aa).

The protein localises to the mitochondrion. This is an uncharacterized protein from Arabidopsis thaliana (Mouse-ear cress).